The following is a 693-amino-acid chain: C6 finger domain transcription factor nscR (693 aa).

A DNA-binding region (zn(2)-C6 fungal-type) is located at residues 17-43 (CELCRERKVKCDKLDPCTNCSSAGVIC). The tract at residues 589 to 608 (AANTLSVPHTPPSRSSITSS) is disordered.

It localises to the nucleus. Its function is as follows. Transcription factor that specifically regulates the neosartoricin B biosynthesis gene cluster. This Trichophyton rubrum (strain ATCC MYA-4607 / CBS 118892) (Athlete's foot fungus) protein is C6 finger domain transcription factor nscR.